Consider the following 544-residue polypeptide: 4-coumarate--CoA ligase 2 (544 aa).

Residues Ser-190, Ser-191, Gly-192, Thr-193, Thr-194, and Lys-198 each coordinate ATP. Tyr-240 serves as a coordination point for (E)-4-coumaroyl-AMP. Lys-261 is a binding site for CoA. Residues 263 to 332 are SBD1; sequence DIVPFLELIQ…AKFPNAKLGQ (70 aa). Residues Ala-310, Gln-332, Gly-333, Thr-337, and Met-345 each contribute to the (E)-4-coumaroyl-AMP site. Residues Gln-332, Gly-333, and Thr-337 each contribute to the ATP site. The interval 333–400 is SBD2; it reads GYGMTEAGPV…IRGDQIMKGY (68 aa). ATP contacts are provided by Asp-421 and Arg-436. Residues Lys-438 and Lys-442 each coordinate (E)-4-coumaroyl-AMP. 2 residues coordinate CoA: Lys-444 and Gly-445. Lys-527 contacts ATP.

This sequence belongs to the ATP-dependent AMP-binding enzyme family. The cofactor is Mg(2+).

The enzyme catalyses (E)-4-coumarate + ATP + CoA = (E)-4-coumaroyl-CoA + AMP + diphosphate. It carries out the reaction (E)-4-coumarate + ATP + H(+) = (E)-4-coumaroyl-AMP + diphosphate. The catalysed reaction is (E)-4-coumaroyl-AMP + CoA = (E)-4-coumaroyl-CoA + AMP + H(+). Its pathway is phytoalexin biosynthesis; 3,4',5-trihydroxystilbene biosynthesis; 3,4',5-trihydroxystilbene from trans-4-coumarate: step 1/2. Its function is as follows. Carboxylate--CoA ligase that may use 4-coumarate as substrate. Follows a two-step reaction mechanism, wherein the carboxylate substrate first undergoes adenylation by ATP, followed by a thioesterification in the presence of CoA to yield the final CoA thioester. The protein is 4-coumarate--CoA ligase 2 (4CL2) of Petroselinum crispum (Parsley).